Here is a 551-residue protein sequence, read N- to C-terminus: ATP synthase subunit alpha (551 aa).

174–181 contacts ATP; the sequence is GDRQTGKT.

Belongs to the ATPase alpha/beta chains family. As to quaternary structure, F-type ATPases have 2 components, CF(1) - the catalytic core - and CF(0) - the membrane proton channel. CF(1) has five subunits: alpha(3), beta(3), gamma(1), delta(1), epsilon(1). CF(0) has three main subunits: a(1), b(2) and c(9-12). The alpha and beta chains form an alternating ring which encloses part of the gamma chain. CF(1) is attached to CF(0) by a central stalk formed by the gamma and epsilon chains, while a peripheral stalk is formed by the delta and b chains.

The protein resides in the cell inner membrane. The enzyme catalyses ATP + H2O + 4 H(+)(in) = ADP + phosphate + 5 H(+)(out). Functionally, produces ATP from ADP in the presence of a proton gradient across the membrane. The alpha chain is a regulatory subunit. In Salinibacter ruber (strain DSM 13855 / M31), this protein is ATP synthase subunit alpha.